The chain runs to 184 residues: Dual specificity protein phosphatase 22 (184 aa).

The N-myristoyl glycine moiety is linked to residue G2. The Tyrosine-protein phosphatase domain occupies 4–144 (GMSQILPGLY…LQEFEKHEVH (141 aa)). C88 acts as the Phosphocysteine intermediate in catalysis. A protein contacts are provided by L89, A90, V92, S93, and R94.

It belongs to the protein-tyrosine phosphatase family. Non-receptor class dual specificity subfamily. As to quaternary structure, monomer. Interacts with LCK; the interaction is direct. Interacts with UBR2; the interaction is direct. Post-translationally, myristoylation regulates subcellular location, and is necessary for activation of JNK.

The protein resides in the cytoplasm. It catalyses the reaction O-phospho-L-tyrosyl-[protein] + H2O = L-tyrosyl-[protein] + phosphate. The catalysed reaction is O-phospho-L-seryl-[protein] + H2O = L-seryl-[protein] + phosphate. It carries out the reaction O-phospho-L-threonyl-[protein] + H2O = L-threonyl-[protein] + phosphate. In terms of biological role, dual specificity phosphatase; can dephosphorylate both phosphotyrosine and phosphoserine or phosphothreonine residues. Activates the JNK signaling pathway. Inhibits T-cell receptor signaling and T-cell mediated immune responses, acting, at least in part, by inducing degradation of E3 ubiquitin ligase UBR2. Dephosphorylates and thereby induces 'Lys-48'-linked ubiquitination of UBR2, leading to proteasomal degradation of UBR2. Dephosphorylates and thereby inactivates tyrosine kinase LCK. Inhibits UBR2-mediated 'Lys-63'-linked ubiquitination of LCK. May play a role in B-cell receptor (BCR) signaling and B-cell function. This Mus musculus (Mouse) protein is Dual specificity protein phosphatase 22 (Dusp22).